A 45-amino-acid polypeptide reads, in one-letter code: INNWVRVPPCDQVCSRTNPEKDECCRAHGHAFHATCSGGMQCYRR.

3 disulfides stabilise this stretch: Cys-10–Cys-24, Cys-14–Cys-36, and Cys-25–Cys-42.

Monomer. Hemolymph.

It localises to the secreted. Functionally, has antimicrobial activity. Is particularly active against fungi, and to a lesser extent against Gram-positive and Gram-negative bacteria. This chain is Psychimicin, found in Oiketicus kirbyi (Bagworm moth).